Reading from the N-terminus, the 333-residue chain is Ketol-acid reductoisomerase (NADP(+)) (333 aa).

Residues 1–181 (MKVYYDQDAD…GGARSGVIET (181 aa)) enclose the KARI N-terminal Rossmann domain. NADP(+) contacts are provided by residues 24-27 (YGSQ), arginine 47, and 82-85 (DEVQ). Histidine 107 is a catalytic residue. Glycine 133 contacts NADP(+). One can recognise a KARI C-terminal knotted domain in the interval 182 to 327 (TFREETETDL…KELRSMMPWL (146 aa)). Residues aspartate 190, glutamate 194, glutamate 226, and glutamate 230 each contribute to the Mg(2+) site. Serine 251 is a substrate binding site.

It belongs to the ketol-acid reductoisomerase family. Mg(2+) is required as a cofactor.

It catalyses the reaction (2R)-2,3-dihydroxy-3-methylbutanoate + NADP(+) = (2S)-2-acetolactate + NADPH + H(+). It carries out the reaction (2R,3R)-2,3-dihydroxy-3-methylpentanoate + NADP(+) = (S)-2-ethyl-2-hydroxy-3-oxobutanoate + NADPH + H(+). It participates in amino-acid biosynthesis; L-isoleucine biosynthesis; L-isoleucine from 2-oxobutanoate: step 2/4. It functions in the pathway amino-acid biosynthesis; L-valine biosynthesis; L-valine from pyruvate: step 2/4. Functionally, involved in the biosynthesis of branched-chain amino acids (BCAA). Catalyzes an alkyl-migration followed by a ketol-acid reduction of (S)-2-acetolactate (S2AL) to yield (R)-2,3-dihydroxy-isovalerate. In the isomerase reaction, S2AL is rearranged via a Mg-dependent methyl migration to produce 3-hydroxy-3-methyl-2-ketobutyrate (HMKB). In the reductase reaction, this 2-ketoacid undergoes a metal-dependent reduction by NADPH to yield (R)-2,3-dihydroxy-isovalerate. This is Ketol-acid reductoisomerase (NADP(+)) from Desulfovibrio desulfuricans (strain ATCC 27774 / DSM 6949 / MB).